The sequence spans 391 residues: S-adenosylmethionine synthase (391 aa).

Position 16 (H16) interacts with ATP. Residue D18 coordinates Mg(2+). E44 is a binding site for K(+). E57 and Q101 together coordinate L-methionine. The interval Q101–A111 is flexible loop. Residues D166–K168, D244, R250–K251, A267, and K271 each bind ATP. Residue D244 coordinates L-methionine. L-methionine is bound at residue K275.

It belongs to the AdoMet synthase family. In terms of assembly, homotetramer; dimer of dimers. Mg(2+) serves as cofactor. It depends on K(+) as a cofactor.

The protein resides in the cytoplasm. It carries out the reaction L-methionine + ATP + H2O = S-adenosyl-L-methionine + phosphate + diphosphate. It functions in the pathway amino-acid biosynthesis; S-adenosyl-L-methionine biosynthesis; S-adenosyl-L-methionine from L-methionine: step 1/1. In terms of biological role, catalyzes the formation of S-adenosylmethionine (AdoMet) from methionine and ATP. The overall synthetic reaction is composed of two sequential steps, AdoMet formation and the subsequent tripolyphosphate hydrolysis which occurs prior to release of AdoMet from the enzyme. This is S-adenosylmethionine synthase from Zymomonas mobilis subsp. mobilis (strain ATCC 31821 / ZM4 / CP4).